A 65-amino-acid polypeptide reads, in one-letter code: Small ribosomal subunit protein eS17 (65 aa).

This sequence belongs to the eukaryotic ribosomal protein eS17 family.

This is Small ribosomal subunit protein eS17 from Methanobrevibacter smithii (strain ATCC 35061 / DSM 861 / OCM 144 / PS).